The chain runs to 385 residues: Flap endonuclease 1 (385 aa).

Residues 1–105 (MGIKGLNAII…HELSKRSARR (105 aa)) are N-domain. Aspartate 34 is a Mg(2+) binding site. Residues arginine 47 and arginine 71 each coordinate DNA. Mg(2+) is bound by residues aspartate 87, glutamate 156, glutamate 158, aspartate 177, and aspartate 179. Residues 120–251 (EKLKHERRLV…VTALKLIKEH (132 aa)) form an I-domain region. Glutamate 156 is a DNA binding site. The DNA site is built by glycine 229 and aspartate 231. Residue aspartate 231 coordinates Mg(2+). Residues 338–346 (VQGRLDGFF) are interaction with PCNA. Over residues 356 to 370 (LAAANAKAKSTKAGK) the composition is skewed to low complexity. Residues 356-385 (LAAANAKAKSTKAGKQATKGKVGKPGRPRK) form a disordered region. A compositionally biased stretch (basic residues) spans 376-385 (KVGKPGRPRK).

Belongs to the XPG/RAD2 endonuclease family. FEN1 subfamily. In terms of assembly, interacts with PCNA. Three molecules of FEN1 bind to one PCNA trimer with each molecule binding to one PCNA monomer. PCNA stimulates the nuclease activity without altering cleavage specificity. Mg(2+) is required as a cofactor. Phosphorylated. Phosphorylation upon DNA damage induces relocalization to the nuclear plasma.

It localises to the nucleus. The protein localises to the nucleolus. Its subcellular location is the nucleoplasm. The protein resides in the mitochondrion. Its function is as follows. Structure-specific nuclease with 5'-flap endonuclease and 5'-3' exonuclease activities involved in DNA replication and repair. During DNA replication, cleaves the 5'-overhanging flap structure that is generated by displacement synthesis when DNA polymerase encounters the 5'-end of a downstream Okazaki fragment. It enters the flap from the 5'-end and then tracks to cleave the flap base, leaving a nick for ligation. Also involved in the long patch base excision repair (LP-BER) pathway, by cleaving within the apurinic/apyrimidinic (AP) site-terminated flap. Acts as a genome stabilization factor that prevents flaps from equilibrating into structures that lead to duplications and deletions. Also possesses 5'-3' exonuclease activity on nicked or gapped double-stranded DNA, and exhibits RNase H activity. Also involved in replication and repair of rDNA and in repairing mitochondrial DNA. This is Flap endonuclease 1 from Lachancea thermotolerans (strain ATCC 56472 / CBS 6340 / NRRL Y-8284) (Yeast).